The following is a 120-amino-acid chain: Putative B3 domain-containing protein At3g28853 (120 aa).

The TF-B3 DNA-binding region spans 19–120 (INKRLTQSDV…DKSNEVFYII (102 aa)).

It localises to the nucleus. The chain is Putative B3 domain-containing protein At3g28853 from Arabidopsis thaliana (Mouse-ear cress).